The following is a 65-amino-acid chain: MPKMKTCKSARKRYAFTSKGKVKYKKQNLRHILTKKSAKRKRNLGKSGLVSNVEVKRIKTLLPYV.

This sequence belongs to the bacterial ribosomal protein bL35 family.

The sequence is that of Large ribosomal subunit protein bL35 from Borrelia duttonii (strain Ly).